The primary structure comprises 430 residues: CinA-like protein (430 aa).

This sequence belongs to the CinA family.

The sequence is that of CinA-like protein from Prochlorococcus marinus (strain NATL2A).